Reading from the N-terminus, the 384-residue chain is S-adenosylmethionine synthase (384 aa).

Histidine 15 serves as a coordination point for ATP. Residue aspartate 17 coordinates Mg(2+). Position 43 (glutamate 43) interacts with K(+). The L-methionine site is built by glutamate 56 and glutamine 99. Positions glutamine 99–arginine 109 are flexible loop. ATP is bound by residues aspartate 164–lysine 166, arginine 230–phenylalanine 231, aspartate 239, arginine 245–lysine 246, alanine 262, and lysine 266. Residue aspartate 239 coordinates L-methionine. Lysine 270 contacts L-methionine.

Belongs to the AdoMet synthase family. As to quaternary structure, homotetramer; dimer of dimers. It depends on Mg(2+) as a cofactor. K(+) serves as cofactor.

Its subcellular location is the cytoplasm. The catalysed reaction is L-methionine + ATP + H2O = S-adenosyl-L-methionine + phosphate + diphosphate. It participates in amino-acid biosynthesis; S-adenosyl-L-methionine biosynthesis; S-adenosyl-L-methionine from L-methionine: step 1/1. Catalyzes the formation of S-adenosylmethionine (AdoMet) from methionine and ATP. The overall synthetic reaction is composed of two sequential steps, AdoMet formation and the subsequent tripolyphosphate hydrolysis which occurs prior to release of AdoMet from the enzyme. The chain is S-adenosylmethionine synthase from Edwardsiella ictaluri (strain 93-146).